Consider the following 203-residue polypeptide: ATP-dependent Clp protease proteolytic subunit 2 (203 aa).

Catalysis depends on S101, which acts as the Nucleophile. H126 is a catalytic residue.

It belongs to the peptidase S14 family. As to quaternary structure, fourteen ClpP subunits assemble into 2 heptameric rings which stack back to back to give a disk-like structure with a central cavity, resembling the structure of eukaryotic proteasomes.

It localises to the cytoplasm. It catalyses the reaction Hydrolysis of proteins to small peptides in the presence of ATP and magnesium. alpha-casein is the usual test substrate. In the absence of ATP, only oligopeptides shorter than five residues are hydrolyzed (such as succinyl-Leu-Tyr-|-NHMec, and Leu-Tyr-Leu-|-Tyr-Trp, in which cleavage of the -Tyr-|-Leu- and -Tyr-|-Trp bonds also occurs).. In terms of biological role, cleaves peptides in various proteins in a process that requires ATP hydrolysis. Has a chymotrypsin-like activity. Plays a major role in the degradation of misfolded proteins. In Prochlorococcus marinus (strain MIT 9312), this protein is ATP-dependent Clp protease proteolytic subunit 2.